The primary structure comprises 628 residues: 1-deoxy-D-xylulose-5-phosphate synthase (628 aa).

Residues His80 and 121-123 contribute to the thiamine diphosphate site; that span reads GHS. Asp152 lines the Mg(2+) pocket. Thiamine diphosphate-binding positions include 153-154, Asn181, Tyr289, and Glu370; that span reads GG. Asn181 serves as a coordination point for Mg(2+).

The protein belongs to the transketolase family. DXPS subfamily. As to quaternary structure, homodimer. The cofactor is Mg(2+). Thiamine diphosphate is required as a cofactor.

It catalyses the reaction D-glyceraldehyde 3-phosphate + pyruvate + H(+) = 1-deoxy-D-xylulose 5-phosphate + CO2. Its pathway is metabolic intermediate biosynthesis; 1-deoxy-D-xylulose 5-phosphate biosynthesis; 1-deoxy-D-xylulose 5-phosphate from D-glyceraldehyde 3-phosphate and pyruvate: step 1/1. In terms of biological role, catalyzes the acyloin condensation reaction between C atoms 2 and 3 of pyruvate and glyceraldehyde 3-phosphate to yield 1-deoxy-D-xylulose-5-phosphate (DXP). The chain is 1-deoxy-D-xylulose-5-phosphate synthase from Alkalilimnicola ehrlichii (strain ATCC BAA-1101 / DSM 17681 / MLHE-1).